The following is a 422-amino-acid chain: Large ribosomal subunit protein uL4 (422 aa).

Alanine 2 is subject to N-acetylalanine. Residue lysine 14 is modified to N6-acetyllysine. Omega-N-methylarginine is present on arginine 97. Residue lysine 106 is modified to N6-acetyllysine. Lysine 239 is covalently cross-linked (Glycyl lysine isopeptide (Lys-Gly) (interchain with G-Cter in SUMO2)). The residue at position 259 (lysine 259) is an N6-acetyllysine. Threonine 266 carries the phosphothreonine modification. Serine 290 and serine 295 each carry phosphoserine. Residue arginine 300 is modified to Citrulline. Lysine 327 participates in a covalent cross-link: Glycyl lysine isopeptide (Lys-Gly) (interchain with G-Cter in SUMO2). Residues lysine 333 and lysine 353 each carry the N6-acetyllysine modification. The interval 359-422 (EAKSDQKGVQ…PTSEEKKAAA (64 aa)) is disordered. Position 361 is an N6-acetyllysine; alternate (lysine 361). Lysine 361 is covalently cross-linked (Glycyl lysine isopeptide (Lys-Gly) (interchain with G-Cter in SUMO1); alternate). Serine 362 is subject to Phosphoserine. Composition is skewed to basic and acidic residues over residues 376–385 (NKEKKAVGDK) and 402–422 (PAAE…KAAA).

It belongs to the universal ribosomal protein uL4 family. As to quaternary structure, component of the large ribosomal subunit. May bind IPO9 with low affinity. Interacts with RBM3. Post-translationally, citrullinated by PADI4.

It is found in the cytoplasm. In terms of biological role, component of the large ribosomal subunit. The ribosome is a large ribonucleoprotein complex responsible for the synthesis of proteins in the cell. The sequence is that of Large ribosomal subunit protein uL4 (RPL4) from Bos taurus (Bovine).